Here is a 186-residue protein sequence, read N- to C-terminus: ADP-ribosylation factor-like protein 8A (186 aa).

An intramembrane region (note=Mediates targeting to membranes) is located at residues 1 to 19 (MIALFNKLLDWFKALFWKE). GTP contacts are provided by residues 29–35 (QYSGKTT), 71–75 (DIGGQ), and 130–133 (NKRD).

The protein belongs to the small GTPase superfamily. Arf family. Interacts with PLEKHM1. When GTP-bound, interacts with RUFY3 and RUFY4, but not with RUFY1, nor RUFY2.

The protein localises to the late endosome membrane. Its subcellular location is the lysosome membrane. The protein resides in the cytoplasm. It localises to the cytoskeleton. It is found in the spindle. The protein localises to the cell projection. Its subcellular location is the axon. The protein resides in the synapse. Plays a role in lysosomes motility. In neurons, mediates the anterograde axonal long-range transport of presynaptic lysosome-related vesicles required for presynaptic biogenesis and synaptic function. May play a role in chromosome segregation. In Mus musculus (Mouse), this protein is ADP-ribosylation factor-like protein 8A (Arl8a).